Reading from the N-terminus, the 121-residue chain is Small ribosomal subunit protein uS13 (121 aa).

The interval 92 to 121 (RKGLPVRGQSSKTNARTVKGPRKTVANKKK) is disordered. Over residues 110-121 (KGPRKTVANKKK) the composition is skewed to basic residues.

This sequence belongs to the universal ribosomal protein uS13 family. Part of the 30S ribosomal subunit. Forms a loose heterodimer with protein S19. Forms two bridges to the 50S subunit in the 70S ribosome.

In terms of biological role, located at the top of the head of the 30S subunit, it contacts several helices of the 16S rRNA. In the 70S ribosome it contacts the 23S rRNA (bridge B1a) and protein L5 of the 50S subunit (bridge B1b), connecting the 2 subunits; these bridges are implicated in subunit movement. Contacts the tRNAs in the A and P-sites. This chain is Small ribosomal subunit protein uS13, found in Mycoplasma mycoides subsp. mycoides SC (strain CCUG 32753 / NCTC 10114 / PG1).